The primary structure comprises 388 residues: Probable serine/threonine-protein kinase PBL20 (388 aa).

The S-palmitoyl cysteine moiety is linked to residue Cys-3. The Protein kinase domain maps to Phe-91–Ile-372. ATP is bound by residues Ile-97–Val-105 and Lys-128. Asp-221 (proton acceptor) is an active-site residue.

The protein belongs to the protein kinase superfamily. Ser/Thr protein kinase family.

Its subcellular location is the cell membrane. The enzyme catalyses L-seryl-[protein] + ATP = O-phospho-L-seryl-[protein] + ADP + H(+). It catalyses the reaction L-threonyl-[protein] + ATP = O-phospho-L-threonyl-[protein] + ADP + H(+). Functionally, may be involved in plant defense signaling. In Arabidopsis thaliana (Mouse-ear cress), this protein is Probable serine/threonine-protein kinase PBL20.